Here is a 393-residue protein sequence, read N- to C-terminus: Putative N(4)-(beta-N-acetylglucosaminyl)-L-asparaginase GH22932 (393 aa).

Positions 15–41 (ALKPITNSSSDTITPNPNLITTSRGSS) are disordered. A compositionally biased stretch (polar residues) spans 19–41 (ITNSSSDTITPNPNLITTSRGSS). Cystine bridges form between Cys100/Cys105 and Cys199/Cys215. The active-site Nucleophile is Thr246. Residues 274–277 (RVGD) and 297–300 (TGDG) each bind substrate. Cys357 and Cys381 are oxidised to a cystine.

This sequence belongs to the Ntn-hydrolase family. Heterotetramer of two alpha and two beta chains arranged as a dimer of alpha/beta heterodimers. In terms of processing, cleaved into an alpha and beta chain by autocatalysis; this activates the enzyme. The N-terminal residue of the beta subunit is responsible for the nucleophile hydrolase activity.

It carries out the reaction N(4)-(beta-N-acetyl-D-glucosaminyl)-L-asparagine + H2O = N-acetyl-beta-D-glucosaminylamine + L-aspartate + H(+). Cleaves the GlcNAc-Asn bond which joins oligosaccharides to the peptide of asparagine-linked glycoproteins. This is Putative N(4)-(beta-N-acetylglucosaminyl)-L-asparaginase GH22932 from Drosophila grimshawi (Hawaiian fruit fly).